A 1521-amino-acid polypeptide reads, in one-letter code: Probable DNA topoisomerase 2 (1521 aa).

A compositionally biased stretch (acidic residues) spans 1-10; that stretch reads MSDSENDYSD. A disordered region spans residues 1-87; the sequence is MSDSENDYSD…DDKSSSSDNE (87 aa). Residues 36–48 are compositionally biased toward basic residues; the sequence is SKKKASATRKPAA. The segment covering 49–62 has biased composition (low complexity); that stretch reads KKATTTTTSTTKKS. ATP is bound by residues asparagine 163, asparagine 192, 220-222, and 233-240; these read SSH and GRNGFGAK. The segment at 412 to 414 is interaction with DNA; that stretch reads NKK. 446–448 serves as a coordination point for ATP; that stretch reads QTK. A Toprim domain is found at 527 to 640; it reads CTLILTEGDS…TLLRMPGFLV (114 aa). Mg(2+) contacts are provided by glutamate 533, aspartate 609, and aspartate 611. One can recognise a Topo IIA-type catalytic domain in the interval 771–1273; it reads IPNIVDGLKT…PIQEIYKRDL (503 aa). Tyrosine 861 functions as the O-(5'-phospho-DNA)-tyrosine intermediate in the catalytic mechanism. The segment at 1007–1047 is disordered; it reads GTRKKKKEEKEKKAASRKGTKAKPTTTKRSKRVDDDDDNEK. Residues 1021-1037 are compositionally biased toward basic residues; the sequence is ASRKGTKAKPTTTKRSK. Residues 1085–1094 are interaction with DNA; sequence KLVSTINETN. Disordered regions lie at residues 1192–1222 and 1335–1521; these read KIKK…EQDD and IPTT…SDSD. Residues 1201-1222 show a composition bias toward acidic residues; it reads DEEDAAISSDEEKDGAQEEQDD. A compositionally biased stretch (low complexity) spans 1354-1368; sequence TTSTSTSTTTSSNTK. The span at 1422–1438 shows a compositional bias: acidic residues; sequence LSDESDQESDQESDQGS. A compositionally biased stretch (low complexity) spans 1454–1467; sequence PTTIATKKATTSKS. Basic and acidic residues predominate over residues 1468-1480; it reads KVIDDKSSDDEVI. Residues 1503–1521 are compositionally biased toward acidic residues; the sequence is SDSDDDDLYDNEESSSDSD.

It belongs to the type II topoisomerase family. In terms of assembly, homodimer. The cofactor is Mg(2+). Mn(2+) is required as a cofactor. Requires Ca(2+) as cofactor.

Its subcellular location is the nucleus. It carries out the reaction ATP-dependent breakage, passage and rejoining of double-stranded DNA.. Control of topological states of DNA by transient breakage and subsequent rejoining of DNA strands. Topoisomerase II makes double-strand breaks. This Dictyostelium discoideum (Social amoeba) protein is Probable DNA topoisomerase 2 (top2).